The sequence spans 353 residues: Guanine nucleotide-binding protein subunit alpha (353 aa).

The tract at residues Met1 to Asn21 is disordered. Gly2 carries N-myristoyl glycine lipidation. Cys3 is lipidated: S-palmitoyl cysteine. Basic and acidic residues predominate over residues Thr7–Asn21. Residues Asn32–Ile353 enclose the G-alpha domain. The interval Lys35–Thr48 is G1 motif. GTP is bound by residues Glu43, Ser44, Gly45, Lys46, Ser47, Thr48, Asp150, Leu175, Thr181, Gly203, Asn269, Lys270, Asp272, and Ala325. Ser47 contributes to the Mg(2+) binding site. The interval Asp173–Thr181 is G2 motif. Residue Thr181 participates in Mg(2+) binding. Positions Tyr196–Arg205 are G3 motif. The G4 motif stretch occupies residues Ile265–Asp272. The interval Thr323–Thr328 is G5 motif.

The protein belongs to the G-alpha family. G(q) subfamily. In terms of assembly, g proteins are composed of 3 units; alpha, beta and gamma. The alpha chain contains the guanine nucleotide binding site. Requires Mg(2+) as cofactor.

In terms of biological role, guanine nucleotide-binding proteins (G proteins) are involved as modulators or transducers in various transmembrane signaling systems. Plays a role in pathogenicity, specifically in appressorium formation in rice blast disease. Also involved in mating. This chain is Guanine nucleotide-binding protein subunit alpha (MAGB), found in Pyricularia oryzae (strain 70-15 / ATCC MYA-4617 / FGSC 8958) (Rice blast fungus).